We begin with the raw amino-acid sequence, 606 residues long: Neutral/alkaline invertase 3, chloroplastic (606 aa).

Residues 1–58 (MGIAEVALHSMPGAFAAHSPASNLPLAADAARGRRRRSANSLHSSRALQGPVRFPGLR) constitute a chloroplast transit peptide. Residues 97–126 (RVPGQAVGGNGSVNGSAAKPPPQRRKASSV) are disordered.

It belongs to the glycosyl hydrolase 100 family.

It is found in the plastid. The protein resides in the chloroplast. The catalysed reaction is Hydrolysis of terminal non-reducing beta-D-fructofuranoside residues in beta-D-fructofuranosides.. In terms of biological role, mitochondrial invertase that cleaves sucrose into glucose and fructose. This Oryza sativa subsp. japonica (Rice) protein is Neutral/alkaline invertase 3, chloroplastic.